A 348-amino-acid chain; its full sequence is Fructose-1,6-bisphosphatase class 1 (348 aa).

4 residues coordinate Mg(2+): Glu-104, Asp-126, Leu-128, and Asp-129. Substrate-binding positions include 129–132, Asn-221, Tyr-249, and Lys-279; that span reads DGSS. A Mg(2+)-binding site is contributed by Glu-285.

It belongs to the FBPase class 1 family. As to quaternary structure, homotetramer. Mg(2+) serves as cofactor.

Its subcellular location is the cytoplasm. The enzyme catalyses beta-D-fructose 1,6-bisphosphate + H2O = beta-D-fructose 6-phosphate + phosphate. The protein operates within carbohydrate biosynthesis; Calvin cycle. The chain is Fructose-1,6-bisphosphatase class 1 from Thermosynechococcus vestitus (strain NIES-2133 / IAM M-273 / BP-1).